The primary structure comprises 447 residues: MLNSILVILCLIAVSAFFSMSEISLAASRKIKLKLLADEGNINAQRVLNMQENPGMFFTVVQIGLNAVAILGGIVGDAAFSPAFHSLFSRYMSAELSEQLSFILSFSLVTGMFILFADLTPKRIGMIAPEAVALRIINPMRFCLYVCTPLVWFFNGLANIIFRIFKLPMVRKDDITSDDIYAVVEAGALAGVLRKQEHELIENVFELESRTVPSSMTPRENVIWFDLHEDEQSLKNKVAEHPHSKFLVCNEDIDHIIGYVDSKDLLNRVLANQSLALNSGVQIRNTLIVPDTLTLSEALESFKTAGEDFAVIMNEYALVVGIITLNDVMTTLMGDLVGQGLEEQIVARDENSWLIDGGTPIDDVMRVLDIDEFPQSGNYETIGGFMMFMLRKIPKRTDSVKFAGYKFEVVDIDNYRIDQLLVTRIDSKATALSPKLPDAKDKEESVA.

Over 1–4 the chain is Cytoplasmic; sequence MLNS. In terms of domain architecture, CNNM transmembrane spans 1-197; it reads MLNSILVILC…ALAGVLRKQE (197 aa). A helical membrane pass occupies residues 5–25; it reads ILVILCLIAVSAFFSMSEISL. Over 26-54 the chain is Periplasmic; it reads AASRKIKLKLLADEGNINAQRVLNMQENP. Residues 55–75 traverse the membrane as a helical segment; that stretch reads GMFFTVVQIGLNAVAILGGIV. Residues 76–99 lie on the Cytoplasmic side of the membrane; it reads GDAAFSPAFHSLFSRYMSAELSEQ. A helical transmembrane segment spans residues 100–120; it reads LSFILSFSLVTGMFILFADLT. The Periplasmic portion of the chain corresponds to 121–141; sequence PKRIGMIAPEAVALRIINPMR. A helical transmembrane segment spans residues 142 to 162; the sequence is FCLYVCTPLVWFFNGLANIIF. Residues 163-447 lie on the Cytoplasmic side of the membrane; it reads RIFKLPMVRK…DAKDKEESVA (285 aa). 2 consecutive CBS domains span residues 216–275 and 282–343; these read MTPR…NQSL and QIRN…GLEE.

This sequence belongs to the UPF0053 family. PaeA subfamily.

It is found in the cell inner membrane. Involved in cadaverine and putrescine tolerance in stationary phase. May facilitate the efflux of both cadaverine and putrescine from the cytoplasm, reducing potentially toxic levels under certain stress conditions. The chain is Polyamine export protein from Escherichia coli O157:H7.